The chain runs to 281 residues: Phosphatidylglycerol--prolipoprotein diacylglyceryl transferase (281 aa).

Helical transmembrane passes span 29 to 49 (FYSL…GKMI), 64 to 84 (LFFY…VLFY), 100 to 120 (GGMS…FVSW), and 124 to 144 (LNWL…MFLG). Residue Arg145 participates in a 1,2-diacyl-sn-glycero-3-phospho-(1'-sn-glycerol) binding. Helical transmembrane passes span 180 to 200 (QLYQ…LLFW), 209 to 229 (GVLV…NEFF), and 248 to 268 (GQWL…YALT).

The protein belongs to the Lgt family.

It localises to the cell inner membrane. The enzyme catalyses L-cysteinyl-[prolipoprotein] + a 1,2-diacyl-sn-glycero-3-phospho-(1'-sn-glycerol) = an S-1,2-diacyl-sn-glyceryl-L-cysteinyl-[prolipoprotein] + sn-glycerol 1-phosphate + H(+). It functions in the pathway protein modification; lipoprotein biosynthesis (diacylglyceryl transfer). Its function is as follows. Catalyzes the transfer of the diacylglyceryl group from phosphatidylglycerol to the sulfhydryl group of the N-terminal cysteine of a prolipoprotein, the first step in the formation of mature lipoproteins. The sequence is that of Phosphatidylglycerol--prolipoprotein diacylglyceryl transferase from Erythrobacter litoralis (strain HTCC2594).